The chain runs to 163 residues: Jun dimerization protein 2 (163 aa).

Disordered stretches follow at residues M1–G20 and K59–C89. Residue K65 forms a Glycyl lysine isopeptide (Lys-Gly) (interchain with G-Cter in SUMO2) linkage. The region spanning E72–H135 is the bZIP domain. The interval R74–R96 is basic motif. The segment at L100–L128 is leucine-zipper. T148 carries the phosphothreonine; by MAPK8 modification.

It belongs to the bZIP family. ATF subfamily. Forms a homodimer or heterodimer with JUN, JUNB, JUND, CEBPG and ATF2 thereby inhibiting transactivation by JUN, ATF2 and CEBPG. Binds multiple DNA elements such as cAMP-response element (CRE) and TPA response element (TRE) either as homodimer or heterodimer. Interacts with IRF2BP1. In terms of processing, phosphorylation of Thr-148 by MAPK8 in response to different stress conditions such as, UV irradiation, oxidatives stress and anisomycin treatments. Polyubiquitinated; probably by IRF2BP1. Ubiquitously expressed in all adult tissues tested as well in embryos.

It localises to the nucleus. Its function is as follows. Component of the AP-1 transcription factor that represses transactivation mediated by the Jun family of proteins. Involved in a variety of transcriptional responses associated with AP-1, such as UV-induced apoptosis, cell differentiation, tumorigenesis and antitumogeneris. Can also function as a repressor by recruiting histone deacetylase 3/HDAC3 to the promoter region of JUN. May control transcription via direct regulation of the modification of histones and the assembly of chromatin. The sequence is that of Jun dimerization protein 2 (Jdp2) from Mus musculus (Mouse).